The chain runs to 494 residues: GlcNAc-binding protein A (494 aa).

The first 21 residues, 1-21 (MKLNKIMLAMVVMSISGTAMA), serve as a signal peptide directing secretion. One can recognise a Chitin-binding type-4 domain in the interval 22–192 (HGYIENPPSR…TFYNMIDAEF (171 aa)). The Chitin-binding type-3 domain maps to 435-484 (APAWSNKSSYQAKDTVTHNGRIYMSKWWADKASVPGDAAVTDTTGNGSGW). Residues 474-494 (VTDTTGNGSGWGKVWEDKGAC) form a disordered region.

The protein belongs to the GbpA family.

It localises to the secreted. Probably interacts with GlcNAc residues. May promote attachment to both epithelial cell surfaces and chitin. This Yersinia enterocolitica serotype O:8 / biotype 1B (strain NCTC 13174 / 8081) protein is GlcNAc-binding protein A.